The following is a 658-amino-acid chain: NUAK family SNF1-like kinase 1 (658 aa).

Methionine 1 bears the N-acetylmethionine mark. The disordered stretch occupies residues 1–53 (MEGAAVSAAGDGPAVETGLPGSPLEAVAGATAAPVEPRKPHGVKRHHHKHNLK). A Phosphoserine modification is found at serine 22. The span at 40–53 (PHGVKRHHHKHNLK) shows a compositional bias: basic residues. The Protein kinase domain occupies 56–307 (YELQETLGKG…IEDIANHWWV (252 aa)). ATP contacts are provided by residues 62-70 (LGKGTYGKV) and lysine 85. Aspartate 179 functions as the Proton acceptor in the catalytic mechanism. Threonine 212 bears the Phosphothreonine; by LKB1 mark. 2 disordered regions span residues 353 to 422 (LAKP…EGIV) and 441 to 568 (IPLP…SYSR). The span at 378-393 (FPQSGQDSVPESPSKL) shows a compositional bias: polar residues. Over residues 394 to 405 (SSKRPKGILKKR) the composition is skewed to basic residues. Positions 400-403 (GILK) match the GILK motif motif. Serine 456 is modified (phosphoserine). Positions 519 to 530 (SCRRKGILKHSS) are enriched in basic residues. A compositionally biased stretch (low complexity) spans 559–568 (SDGISRSYSR). Residue serine 601 is modified to Phosphoserine; by PKB/AKT1.

The protein belongs to the protein kinase superfamily. CAMK Ser/Thr protein kinase family. SNF1 subfamily. As to quaternary structure, interacts (via GILK motif) with PPP1CB; the interaction is direct and bridges NUAK1 and PPP1R12A. Interacts with CDKN1A. It depends on Mg(2+) as a cofactor. Phosphorylated at Thr-212 by STK11/LKB1 in complex with STE20-related adapter-alpha (STRADA) pseudo kinase and CAB39. Not dephosphorylated by the myosin PP1 complex when regulating its activity, due to the presence of PPP1R12A, which prevents myosin PP1 from dephosphorylating NUAK1. Phosphorylated by STK38L upon stimulation with IGF1. Post-translationally, ubiquitinated with 'Lys-29'- and 'Lys-33'-linked polyubiquitins which appear to impede LKB1-mediated phosphorylation. Deubiquitinated by USP9X. In terms of tissue distribution, expressed in the developing central nervous system, in epidermis, and some other tissues.

The protein resides in the nucleus. The protein localises to the cytoplasm. The enzyme catalyses L-seryl-[protein] + ATP = O-phospho-L-seryl-[protein] + ADP + H(+). The catalysed reaction is L-threonyl-[protein] + ATP = O-phospho-L-threonyl-[protein] + ADP + H(+). Its activity is regulated as follows. Activated by phosphorylation on Thr-212. Activated by phosphorylation at Ser-601 AKT1 during glucose starvation; the relevance of such activation in normal cells is however unsure. Functionally, serine/threonine-protein kinase involved in various processes such as cell adhesion, regulation of cell ploidy and senescence, cell proliferation and tumor progression. Phosphorylates ATM, CASP6, LATS1, PPP1R12A and p53/TP53. Acts as a regulator of cellular senescence and cellular ploidy by mediating phosphorylation of 'Ser-464' of LATS1, thereby controlling its stability. Controls cell adhesion by regulating activity of the myosin protein phosphatase 1 (PP1) complex. Acts by mediating phosphorylation of PPP1R12A subunit of myosin PP1: phosphorylated PPP1R12A then interacts with 14-3-3, leading to reduced dephosphorylation of myosin MLC2 by myosin PP1. May be involved in DNA damage response: phosphorylates p53/TP53 at 'Ser-15' and 'Ser-392' and is recruited to the CDKN1A/WAF1 promoter to participate in transcription activation by p53/TP53. May also act as a tumor malignancy-associated factor by promoting tumor invasion and metastasis under regulation and phosphorylation by AKT1. Suppresses Fas-induced apoptosis by mediating phosphorylation of CASP6, thereby suppressing the activation of the caspase and the subsequent cleavage of CFLAR. Regulates UV radiation-induced DNA damage response mediated by CDKN1A. In association with STK11, phosphorylates CDKN1A in response to UV radiation and contributes to its degradation which is necessary for optimal DNA repair. This Mus musculus (Mouse) protein is NUAK family SNF1-like kinase 1 (Nuak1).